We begin with the raw amino-acid sequence, 318 residues long: DNA repair nuclease/redox regulator APEX1 (318 aa).

The interval Met-1–Ser-59 is disordered. Residues Pro-2 to Asn-33 are necessary for interaction with YBX1, binding to RNA, association together with NPM1 to rRNA, endoribonuclease activity on abasic RNA and localization in the nucleoli. Residues Lys-6 and Lys-7 each carry the N6-acetyllysine; by EP300 modification. The Nuclear localization signal (NLS) signature appears at Gly-8–Asp-13. Residues Glu-16–Val-38 show a composition bias toward basic and acidic residues. Residues Ala-23–Asn-33 form a necessary for interaction with NPM1 and for efficient rRNA binding region. Residues Lys-27, Lys-31, Lys-32, and Lys-35 each carry the N6-acetyllysine modification. Residue Ser-54 is modified to Phosphoserine. The Nuclear export signal (NES) motif lies at Ile-64 to Gly-80. At Cys-65 the chain carries S-nitrosocysteine; alternate. Cys-65 and Cys-93 form a disulfide bridge. Mg(2+) is bound at residue Asp-70. Position 93 is an S-nitrosocysteine; alternate (Cys-93). Glu-96 provides a ligand contact to Mg(2+). Tyr-171 is a catalytic residue. Lys-197 bears the N6-acetyllysine mark. Mg(2+) contacts are provided by Asp-210 and Asn-212. The active-site Proton donor/acceptor is Asp-210. Residue Thr-233 is modified to Phosphothreonine; by CDK5. The interval Gln-289 to Leu-318 is mitochondrial targeting sequence (MTS). Asp-308 provides a ligand contact to Mg(2+). Cys-310 is modified (S-nitrosocysteine).

Belongs to the DNA repair enzymes AP/ExoA family. As to quaternary structure, monomer. Homodimer; disulfide-linked. Component of the SET complex, composed of at least APEX1, SET, ANP32A, HMGB2, NME1 and TREX1. Associates with the dimer XRCC5/XRCC6 in a DNA-dependent manner. Interacts with SIRT1; the interaction is increased in the context of genotoxic stress. Interacts with HDAC1, HDAC2 and HDAC3; the interactions are not dependent on the APEX1 acetylation status. Interacts with XRCC1; the interaction is induced by SIRT1 and increased with the APEX1 acetylated form. Interacts with NPM1 (via N-terminal domain); the interaction is RNA-dependent and decreases in hydrogen peroxide-damaged cells. Interacts (via N-terminus) with YBX1 (via C-terminus); the interaction is increased in presence of APEX1 acetylated at Lys-6 and Lys-7. Interacts with HNRNPL; the interaction is DNA-dependent. Interacts (via N-terminus) with KPNA1 and KPNA2. Interacts with TXN; the interaction stimulates the FOS/JUN AP-1 complex DNA-binding activity in a redox-dependent manner. Interacts with GZMA, KRT8, MDM2, POLB, PRDX6, PRPF19, RPLP0, TOMM20 and WDR77. Binds to CDK5. Mg(2+) serves as cofactor. Mn(2+) is required as a cofactor. Post-translationally, phosphorylated. Phosphorylation by kinase PKC or casein kinase CK2 results in enhanced redox activity that stimulates binding of the FOS/JUN AP-1 complex to its cognate binding site. AP-endodeoxyribonuclease activity is not affected by CK2-mediated phosphorylation. Phosphorylation of Thr-233 by CDK5 in response to MPP(+)/MPTP (1-methyl-4-phenylpyridinium) reduces AP-endodeoxyribonuclease activity resulting in accumulation of DNA damage and contributing to neuronal death. Acetylated on Lys-6 and Lys-7. Acetylation is increased by the transcriptional coactivator EP300 acetyltransferase, genotoxic agents like H(2)O(2) and methyl methanesulfonate (MMS). Acetylation increases its binding affinity to the negative calcium response element (nCaRE) DNA promoter. The acetylated form induces a stronger binding of YBX1 to the Y-box sequence in the MDR1 promoter than the unacetylated form. Deacetylated on lysines. Lys-6 and Lys-7 are deacetylated by SIRT1. In terms of processing, cleaved at Lys-31 by granzyme A to create the mitochondrial form; leading in reduction of binding to DNA, AP endodeoxyribonuclease activity, redox activation of transcription factors and to enhanced cell death. Cleaved by granzyme K; leading to intracellular ROS accumulation and enhanced cell death after oxidative stress. Post-translationally, cys-69 and Cys-93 are nitrosylated in response to nitric oxide (NO) and lead to the exposure of the nuclear export signal (NES). Ubiquitinated by MDM2; leading to translocation to the cytoplasm and proteasomal degradation. In terms of tissue distribution, the mitochondrial form is expressed in liver (at protein level). Thymus.

It is found in the nucleus. The protein resides in the nucleolus. The protein localises to the nucleus speckle. It localises to the endoplasmic reticulum. Its subcellular location is the cytoplasm. It is found in the mitochondrion. The enzyme catalyses Exonucleolytic cleavage in the 3'- to 5'-direction to yield nucleoside 5'-phosphates.. With respect to regulation, NPM1 stimulates endodeoxyribonuclease activity on double-stranded DNA with AP sites, but inhibits endoribonuclease activity on single-stranded RNA containing AP sites. Multifunctional protein that plays a central role in the cellular response to oxidative stress. The two major activities of APEX1 are DNA repair and redox regulation of transcriptional factors. Functions as an apurinic/apyrimidinic (AP) endodeoxyribonuclease in the DNA base excision repair (BER) pathway of DNA lesions induced by oxidative and alkylating agents. Initiates repair of AP sites in DNA by catalyzing hydrolytic incision of the phosphodiester backbone immediately adjacent to the damage, generating a single-strand break with 5'-deoxyribose phosphate and 3'-hydroxyl ends. Also incises at AP sites in the DNA strand of DNA/RNA hybrids, single-stranded DNA regions of R-loop structures, and single-stranded RNA molecules. Has 3'-5' exoribonuclease activity on mismatched deoxyribonucleotides at the 3' termini of nicked or gapped DNA molecules during short-patch BER. Possesses DNA 3' phosphodiesterase activity capable of removing lesions (such as phosphoglycolate) blocking the 3' side of DNA strand breaks. May also play a role in the epigenetic regulation of gene expression by participating in DNA demethylation. Acts as a loading factor for POLB onto non-incised AP sites in DNA and stimulates the 5'-terminal deoxyribose 5'-phosphate (dRp) excision activity of POLB. Plays a role in the protection from granzyme-mediated cellular repair leading to cell death. Also involved in the DNA cleavage step of class switch recombination (CSR). On the other hand, APEX1 also exerts reversible nuclear redox activity to regulate DNA binding affinity and transcriptional activity of transcriptional factors by controlling the redox status of their DNA-binding domain, such as the FOS/JUN AP-1 complex after exposure to IR. Involved in calcium-dependent down-regulation of parathyroid hormone (PTH) expression by binding to negative calcium response elements (nCaREs). Together with HNRNPL or the dimer XRCC5/XRCC6, associates with nCaRE, acting as an activator of transcriptional repression. Stimulates the YBX1-mediated MDR1 promoter activity, when acetylated at Lys-6 and Lys-7, leading to drug resistance. Also acts as an endoribonuclease involved in the control of single-stranded RNA metabolism. Plays a role in regulating MYC mRNA turnover by preferentially cleaving in between UA and CA dinucleotides of the MYC coding region determinant (CRD). In association with NMD1, plays a role in the rRNA quality control process during cell cycle progression. Associates, together with YBX1, on the MDR1 promoter. Together with NPM1, associates with rRNA. Binds DNA and RNA. The chain is DNA repair nuclease/redox regulator APEX1 (APEX1) from Bos taurus (Bovine).